A 287-amino-acid polypeptide reads, in one-letter code: Deoxyuridine 5'-triphosphate nucleotidohydrolase (287 aa).

Substrate is bound at residue 173–175 (RSG). A compositionally biased stretch (low complexity) spans 264–275 (SSSKDTSDSQMS). A disordered region spans residues 264 to 287 (SSSKDTSDSQMSRGDAGLGSSGLM).

It belongs to the dUTPase family. It depends on Mg(2+) as a cofactor.

The enzyme catalyses dUTP + H2O = dUMP + diphosphate + H(+). Its function is as follows. Involved in nucleotide metabolism: produces dUMP, the immediate precursor of thymidine nucleotides and decreases the intracellular concentration of dUTP to avoid uracil incorporation into viral DNA. The sequence is that of Deoxyuridine 5'-triphosphate nucleotidohydrolase from Saimiriine herpesvirus 2 (strain 11) (SaHV-2).